The following is an 86-amino-acid chain: Muscarinic toxin MTX6 (86 aa).

An N-terminal signal peptide occupies residues 1 to 21 (MKTLLLTLVVVTILCLDLGYT). Intrachain disulfides connect Cys24-Cys45, Cys38-Cys63, Cys67-Cys78, and Cys79-Cys84.

The protein belongs to the three-finger toxin family. Short-chain subfamily. Aminergic toxin sub-subfamily. As to quaternary structure, monomer. As to expression, expressed by the venom gland.

Its subcellular location is the secreted. In terms of biological role, binds to the muscarinic acetylcholine receptor (CHRM). This chain is Muscarinic toxin MTX6, found in Ophiophagus hannah (King cobra).